Here is a 507-residue protein sequence, read N- to C-terminus: Maturase K (507 aa).

It belongs to the intron maturase 2 family. MatK subfamily.

The protein resides in the plastid. It localises to the chloroplast. Its function is as follows. Usually encoded in the trnK tRNA gene intron. Probably assists in splicing its own and other chloroplast group II introns. The protein is Maturase K of Humulus lupulus (European hop).